We begin with the raw amino-acid sequence, 451 residues long: MERPSLSRRTSSSTVSTDGEGVYSRSTKERKRNFIVNSRLKRGGGHVRVNRSGRLGSVTMRPSALTRAHSQNPNSSLVNNSSAVSHLTKQRSLNDLHELNGPKHVAKNGLIPLTQRKPNCVWDDAPVDNDSTAGNLDSDSALPTPSVTTNEAADSSRASSPVTRVVAVHDNKKKIINSNISNAPPFNNTDVQASARPPAAGQDDSAADASTTKSSPVHNEVMAEPLPHSNNREVTQATNQPKWQIHSGSDIASEPPTLSRGNSLSLLANRKVPSTNVKKSQAELYDLGSSTSRTQQKLLIQRASSKFDIVEDDMDTNPSKRFSNPHTKHIMDLVRTQYRNVLRTRELIPEFLEKIRSSYSNNQNFDSQNAFNTSAAGTAGTREETISNGQNGIVASAETSKKDDGVQSASLNASMSARSHARQRSIHVPKTRKDTDYESIHQKLLQLWSQG.

Residues 1 to 35 form a disordered region; the sequence is MERPSLSRRTSSSTVSTDGEGVYSRSTKERKRNFI. Residues 7 to 17 show a composition bias toward low complexity; that stretch reads SRRTSSSTVST. Ser-70 is subject to Phosphoserine. Disordered regions lie at residues 122–164, 176–264, and 362–437; these read WDDA…PVTR, INSN…GNSL, and NQNF…DTDY. Positions 129 to 162 are enriched in polar residues; the sequence is NDSTAGNLDSDSALPTPSVTTNEAADSSRASSPV. Low complexity predominate over residues 203-215; sequence DDSAADASTTKSS. Polar residues-rich tracts occupy residues 228–242, 362–376, and 407–417; these read HSNN…NQPK, NQNF…TSAA, and QSASLNASMSA. Over residues 419–430 the composition is skewed to basic residues; it reads SHARQRSIHVPK.

Belongs to the TORC subunit TCO89 family. In terms of assembly, the target of rapamycin complex 1 (TORC1) is composed of at least mip1, pop3/wat1, tco89, toc1 and tor2. Either Thr-10, Ser-11, Ser-12, Ser-13 or Thr-14 and Ser-214 or Ser-215 and Ser-247 or Ser-249 are phosphorylated as well.

Its subcellular location is the cytoplasm. Functionally, component of TORC1, which regulates multiple cellular processes to control cell growth in response to environmental signals. Tor2 is essential for growth. Nutrient limitation and environmental stress signals cause inactivation of TORC1. Active TORC1 positively controls cell growth and ribosome biogenesis by regulating ribosomal protein gene expression. TORC1 negatively controls G1 cell-cycle arrest, sexual development and amino acid uptake. Represses mating, meiosis and sporulation efficiency by interfering with the functions of the transcription factor ste11 and the meiosis-promoting RNA-binding protein mei2. This chain is Target of rapamycin complex 1 subunit tco89, found in Schizosaccharomyces pombe (strain 972 / ATCC 24843) (Fission yeast).